Consider the following 152-residue polypeptide: Small integral membrane protein 28 (152 aa).

The helical transmembrane segment at 52 to 72 (FLCILLPATILLFLAFLLLFL) threads the bilayer. Residues 117 to 152 (PLPPEATLPSQCLPPSYEEATRNPPGEEAQGCSPSV) are disordered.

It localises to the membrane. The protein is Small integral membrane protein 28 of Homo sapiens (Human).